The sequence spans 321 residues: Probable endolytic peptidoglycan transglycosylase RlpA (321 aa).

This sequence belongs to the RlpA family.

In terms of biological role, lytic transglycosylase with a strong preference for naked glycan strands that lack stem peptides. In Synechocystis sp. (strain ATCC 27184 / PCC 6803 / Kazusa), this protein is Probable endolytic peptidoglycan transglycosylase RlpA.